The primary structure comprises 760 residues: ER membrane protein complex subunit 1 (760 aa).

The signal sequence occupies residues 1-24 (MKITCTDLVYVFILLFLNTSCVQA). Residues 25–723 (VFSDDAFITD…PSGQFDLMSP (699 aa)) are Lumenal-facing. Asparagine 73, asparagine 106, asparagine 192, asparagine 202, asparagine 420, asparagine 443, asparagine 574, and asparagine 578 each carry an N-linked (GlcNAc...) asparagine glycan. The chain crosses the membrane as a helical span at residues 724–744 (TFEKGKLLITIFVLLVITYFI). The Cytoplasmic portion of the chain corresponds to 745-760 (RPSVSNKKLKSQWLIK).

Belongs to the EMC1 family. As to quaternary structure, component of the ER membrane protein complex (EMC), which is composed of EMC1, EMC2, EMC3, EMC4, EMC5 and EMC6. In terms of processing, N-glycosylated.

It localises to the endoplasmic reticulum membrane. In terms of biological role, part of the endoplasmic reticulum membrane protein complex (EMC) that enables the energy-independent insertion into endoplasmic reticulum membranes of newly synthesized membrane proteins. Preferentially accommodates proteins with transmembrane domains that are weakly hydrophobic or contain destabilizing features such as charged and aromatic residues. Involved in the cotranslational insertion of multi-pass membrane proteins in which stop-transfer membrane-anchor sequences become ER membrane spanning helices. It is also required for the post-translational insertion of tail-anchored/TA proteins in endoplasmic reticulum membranes. By mediating the proper cotranslational insertion of N-terminal transmembrane domains in an N-exo topology, with translocated N-terminus in the lumen of the ER, controls the topology of multi-pass membrane proteins. The sequence is that of ER membrane protein complex subunit 1 (EMC1) from Saccharomyces cerevisiae (strain ATCC 204508 / S288c) (Baker's yeast).